The primary structure comprises 477 residues: ATP synthase subunit beta (477 aa).

An ATP-binding site is contributed by 148 to 155; sequence GGAGVGKT.

The protein belongs to the ATPase alpha/beta chains family. F-type ATPases have 2 components, CF(1) - the catalytic core - and CF(0) - the membrane proton channel. CF(1) has five subunits: alpha(3), beta(3), gamma(1), delta(1), epsilon(1). CF(0) has three main subunits: a(1), b(2) and c(9-12). The alpha and beta chains form an alternating ring which encloses part of the gamma chain. CF(1) is attached to CF(0) by a central stalk formed by the gamma and epsilon chains, while a peripheral stalk is formed by the delta and b chains.

The protein localises to the cell inner membrane. It catalyses the reaction ATP + H2O + 4 H(+)(in) = ADP + phosphate + 5 H(+)(out). Functionally, produces ATP from ADP in the presence of a proton gradient across the membrane. The catalytic sites are hosted primarily by the beta subunits. This is ATP synthase subunit beta from Psychrobacter arcticus (strain DSM 17307 / VKM B-2377 / 273-4).